We begin with the raw amino-acid sequence, 606 residues long: DNA mismatch repair protein MutL (606 aa).

The interval 340 to 366 (MNAFRPGYSPSGLRPSPSATWSAATSP) is disordered. Positions 353–366 (RPSPSATWSAATSP) are enriched in low complexity.

Belongs to the DNA mismatch repair MutL/HexB family.

Functionally, this protein is involved in the repair of mismatches in DNA. It is required for dam-dependent methyl-directed DNA mismatch repair. May act as a 'molecular matchmaker', a protein that promotes the formation of a stable complex between two or more DNA-binding proteins in an ATP-dependent manner without itself being part of a final effector complex. This chain is DNA mismatch repair protein MutL, found in Agrobacterium fabrum (strain C58 / ATCC 33970) (Agrobacterium tumefaciens (strain C58)).